The sequence spans 286 residues: Lipoyl synthase (286 aa).

The [4Fe-4S] cluster site is built by cysteine 38, cysteine 43, cysteine 49, cysteine 64, cysteine 68, cysteine 71, and serine 276. One can recognise a Radical SAM core domain in the interval 50-265 (WEQGVATFMI…ENIALDMGFL (216 aa)).

It belongs to the radical SAM superfamily. Lipoyl synthase family. The cofactor is [4Fe-4S] cluster.

Its subcellular location is the cytoplasm. The catalysed reaction is [[Fe-S] cluster scaffold protein carrying a second [4Fe-4S](2+) cluster] + N(6)-octanoyl-L-lysyl-[protein] + 2 oxidized [2Fe-2S]-[ferredoxin] + 2 S-adenosyl-L-methionine + 4 H(+) = [[Fe-S] cluster scaffold protein] + N(6)-[(R)-dihydrolipoyl]-L-lysyl-[protein] + 4 Fe(3+) + 2 hydrogen sulfide + 2 5'-deoxyadenosine + 2 L-methionine + 2 reduced [2Fe-2S]-[ferredoxin]. The protein operates within protein modification; protein lipoylation via endogenous pathway; protein N(6)-(lipoyl)lysine from octanoyl-[acyl-carrier-protein]: step 2/2. Catalyzes the radical-mediated insertion of two sulfur atoms into the C-6 and C-8 positions of the octanoyl moiety bound to the lipoyl domains of lipoate-dependent enzymes, thereby converting the octanoylated domains into lipoylated derivatives. The protein is Lipoyl synthase of Karelsulcia muelleri (strain GWSS) (Sulcia muelleri).